The sequence spans 309 residues: MIIVTGGAGFIGSNIIKALNDKGITDILVVDNLKDGTKFANLVDLNIADYMDKEDFLIQLMAGEEFGEIEAIFHEGACSSTTEWDGKYMMDNNYQYSKEVLHYCLEHEIPFLYASSAATYGGRTSDFIESREYEQPLNVYGYSKFLFDEYVRQILPEANSQIVGFRYFNVYGPREGHKGSMASVAFHLNTQLNNGETPKLFEGSDGFKRDFVYVGDVAAVNLWFWENGVSGIFNLGTGRAESFQAVADAALAFHKKDSLEYIPFPEKLKGRYQAFTQADLTNLRAAGYDKPFKTVAEGVAEYMAWLNRN.

NADP(+) is bound by residues 10–11 (FI), 31–32 (DN), K38, K53, 75–79 (EGACS), and N92. The active-site Proton acceptor is the Y140. K144 serves as a coordination point for NADP(+). Residue N169 participates in substrate binding. Residues V170 and K178 each contribute to the NADP(+) site. Residue K178 is the Proton acceptor of the active site. Substrate-binding positions include S180, H187, 201–204 (FEGS), R209, and Y272.

It belongs to the NAD(P)-dependent epimerase/dehydratase family. HldD subfamily. Homopentamer. It depends on NADP(+) as a cofactor.

The catalysed reaction is ADP-D-glycero-beta-D-manno-heptose = ADP-L-glycero-beta-D-manno-heptose. The protein operates within nucleotide-sugar biosynthesis; ADP-L-glycero-beta-D-manno-heptose biosynthesis; ADP-L-glycero-beta-D-manno-heptose from D-glycero-beta-D-manno-heptose 7-phosphate: step 4/4. Its function is as follows. Catalyzes the interconversion between ADP-D-glycero-beta-D-manno-heptose and ADP-L-glycero-beta-D-manno-heptose via an epimerization at carbon 6 of the heptose. This Enterobacter sp. (strain 638) protein is ADP-L-glycero-D-manno-heptose-6-epimerase.